The chain runs to 137 residues: Peptide methionine sulfoxide reductase MsrB (137 aa).

One can recognise a MsrB domain in the interval 7–129 (AEELKKKLSE…NSASLAFSDE (123 aa)). Positions 46, 49, 95, and 98 each coordinate Zn(2+). Cysteine 118 functions as the Nucleophile in the catalytic mechanism.

Belongs to the MsrB Met sulfoxide reductase family. The cofactor is Zn(2+).

The enzyme catalyses L-methionyl-[protein] + [thioredoxin]-disulfide + H2O = L-methionyl-(R)-S-oxide-[protein] + [thioredoxin]-dithiol. The polypeptide is Peptide methionine sulfoxide reductase MsrB (Salmonella arizonae (strain ATCC BAA-731 / CDC346-86 / RSK2980)).